The primary structure comprises 126 residues: Profilin-1A (126 aa).

The actin binding stretch occupies residues 2-36 (SWQTYVDTNLVGTGAVTQAAILGLDGNTWATSAGF). Lysine 104 is subject to N6,N6,N6-trimethyllysine.

This sequence belongs to the profilin family. As to quaternary structure, occurs in many kinds of cells as a complex with monomeric actin in a 1:1 ratio.

The protein localises to the cytoplasm. Its subcellular location is the cytoskeleton. In terms of biological role, binds to actin and affects the structure of the cytoskeleton. At high concentrations, profilin prevents the polymerization of actin, whereas it enhances it at low concentrations. By binding to PIP2, it inhibits the formation of IP3 and DG. The sequence is that of Profilin-1A from Acanthamoeba castellanii (Amoeba).